The following is a 276-amino-acid chain: F420-dependent methylenetetrahydromethanopterin dehydrogenase (276 aa).

It belongs to the MTD family.

It catalyses the reaction 5,10-methylenetetrahydromethanopterin + oxidized coenzyme F420-(gamma-L-Glu)(n) + 2 H(+) = 5,10-methenyl-5,6,7,8-tetrahydromethanopterin + reduced coenzyme F420-(gamma-L-Glu)(n). Its pathway is one-carbon metabolism; methanogenesis from CO(2); 5,10-methylene-5,6,7,8-tetrahydromethanopterin from 5,10-methenyl-5,6,7,8-tetrahydromethanopterin (coenzyme F420 route): step 1/1. Catalyzes the reversible reduction of methenyl-H(4)MPT(+) to methylene-H(4)MPT. The sequence is that of F420-dependent methylenetetrahydromethanopterin dehydrogenase from Methanococcus vannielii (strain ATCC 35089 / DSM 1224 / JCM 13029 / OCM 148 / SB).